The following is a 60-amino-acid chain: MAVQQNKKSPSKRGMHRSHDALTNPPLAIEPTTGETHLRHHISPNGFYRGKKVIKTKNDD.

Residues 1-60 (MAVQQNKKSPSKRGMHRSHDALTNPPLAIEPTTGETHLRHHISPNGFYRGKKVIKTKNDD) form a disordered region. Positions 49 to 60 (RGKKVIKTKNDD) are enriched in basic residues.

This sequence belongs to the bacterial ribosomal protein bL32 family.

The sequence is that of Large ribosomal subunit protein bL32 from Nitrosomonas eutropha (strain DSM 101675 / C91 / Nm57).